Consider the following 392-residue polypeptide: Ameloblastin (392 aa).

The signal sequence occupies residues methionine 1–alanine 26. Proline 37 bears the Hydroxyproline mark. Serine 43 carries the post-translational modification Phosphoserine. Disordered regions lie at residues phenylalanine 86–lysine 109, threonine 247–proline 280, and threonine 349–proline 392. Residues glutamine 97–lysine 109 are compositionally biased toward low complexity. Residues valine 359–glutamine 381 show a composition bias toward polar residues. Positions isoleucine 382–proline 392 are enriched in basic and acidic residues.

This sequence belongs to the ameloblastin family.

It localises to the secreted. It is found in the extracellular space. The protein localises to the extracellular matrix. In terms of biological role, involved in the mineralization and structural organization of enamel. This Bos taurus (Bovine) protein is Ameloblastin (AMBN).